Reading from the N-terminus, the 146-residue chain is Large ribosomal subunit protein uL15 (146 aa).

A compositionally biased stretch (basic and acidic residues) spans 1–13; that stretch reads MKLHELYPAEGSR. Positions 1-55 are disordered; sequence MKLHELYPAEGSRKVRNRVGRGAATGNGKTSGRGQKGQKARSGGKVRPGFEGGQL. Gly residues predominate over residues 23 to 35; the sequence is AATGNGKTSGRGQ.

Belongs to the universal ribosomal protein uL15 family. In terms of assembly, part of the 50S ribosomal subunit.

In terms of biological role, binds to the 23S rRNA. The protein is Large ribosomal subunit protein uL15 of Staphylococcus carnosus (strain TM300).